Here is a 587-residue protein sequence, read N- to C-terminus: Kelch-like protein 3 (587 aa).

Ser10 bears the Phosphoserine mark. The BTB domain occupies 50–117 (CDVMIVAEDV…VYTAEIEVTE (68 aa)). The region spanning 152–254 (CLGIRAFADV…PRDYLVQTVE (103 aa)) is the BACK domain. Residue Thr295 is modified to Phosphothreonine. Kelch repeat units lie at residues 302 to 347 (VMIV…FMAG), 348 to 394 (HVYA…VLND), 396 to 441 (LYAV…VVEG), 442 to 490 (KLYA…VLSG), 491 to 537 (QLYA…AVNG), and 539 to 585 (LYVV…VIHK). At Thr375 the chain carries Phosphothreonine. Phosphoserine occurs at positions 376 and 433.

This sequence belongs to the KLHL3 family. Homodimer. Component of the BCR(KLHL3) E3 ubiquitin ligase complex, at least composed of CUL3 and KLHL3 and RBX1. Interacts with CLDN8. Phosphorylation at Ser-433 by PKA or PKC decreases the interaction with WNK1 and WNK4, leading to inhibit their degradation by the BCR(KLHL3) complex. Phosphorylated at Ser-433 by PKC in response to angiotensin II signaling, decreasing ability to promote degradation of WNK1 and WNK4, leading to activation of Na-Cl cotransporter SLC12A3/NCC. Phosphorylation at Ser-433 is increased by insulin. Dephosphorylated at Ser-433 by calcineurin PPP3CA, promoting degradation of WNK1 and WNK4.

The protein resides in the cytoplasm. It localises to the cytoskeleton. It is found in the cytosol. Its pathway is protein modification; protein ubiquitination. In terms of biological role, substrate-specific adapter of a BCR (BTB-CUL3-RBX1) E3 ubiquitin ligase complex that acts as a regulator of ion transport in the distal nephron. The BCR(KLHL3) complex acts by mediating ubiquitination and degradation of WNK1 and WNK4, two activators of Na-Cl cotransporter SLC12A3/NCC in distal convoluted tubule cells of kidney, thereby regulating NaCl reabsorption. The BCR(KLHL3) complex also mediates ubiquitination and degradation of WNK3. The BCR(KLHL3) complex also mediates ubiquitination of CLDN8, a tight-junction protein required for paracellular chloride transport in the kidney, leading to its degradation. The protein is Kelch-like protein 3 (KLHL3) of Pongo abelii (Sumatran orangutan).